A 550-amino-acid chain; its full sequence is MNRQLRTVKSCFSLQKTHQYRSFWIQSSLRALPPDVKQNKTEPIPFVPKPEEGSSNKSNSSKFRKRFLLLFLLGITGYSCSVVYCFKDPNFYDYFAEHTPFGKQVLYNVEQSWIGYKYLGGNRIKVDDSSPKLKQNSNNISKKQNSSRNDDTKVKKDTTIERPESLVVEIVDLPSEVTKDTAEESVWKDIGLDQETGLSVTAIPIITETLDHAHEQEIKDQSLRFESSLNEANELHGKLSKIQQEQEHLFEQRLREKVSEMESKLEALLIARDEKWQSAFESEKLRLQKLHEARLQQELFKLASVFESKLKNELTEQAITLEKLHLQSIKAQVEQERGSRLGRLQELRNSFQQLQELVRVVLHENGRVTRLVDVSNTLDDLNKDMRFHKLSEVRQHVNTLKEATKDDELAALASRVIEKIVDSGPILDKEELQTKFDTLSKEIYKTCFLTTESGFFGHLKSIILSQLPAAVFKSPDIVSVKKTLEDARSHLLKDDLDGSVRALLSLSQWPRALSRDWINACRRRMELQQAIEIIKASATLSSQLEDAQQA.

A mitochondrion-targeting transit peptide spans 1 to 38 (MNRQLRTVKSCFSLQKTHQYRSFWIQSSLRALPPDVKQ). Residues 35 to 59 (DVKQNKTEPIPFVPKPEEGSSNKSN) are disordered. The Mitochondrial matrix segment spans residues 39 to 66 (NKTEPIPFVPKPEEGSSNKSNSSKFRKR). Residues 67–86 (FLLLFLLGITGYSCSVVYCF) form a helical membrane-spanning segment. Residues 87–550 (KDPNFYDYFA…SSQLEDAQQA (464 aa)) lie on the Mitochondrial intermembrane side of the membrane. The disordered stretch occupies residues 128 to 158 (DSSPKLKQNSNNISKKQNSSRNDDTKVKKDT). A compositionally biased stretch (low complexity) spans 132–147 (KLKQNSNNISKKQNSS). The segment covering 148 to 158 (RNDDTKVKKDT) has biased composition (basic and acidic residues). Residues 214-275 (HEQEIKDQSL…EALLIARDEK (62 aa)) are a coiled coil.

It belongs to the MICOS complex subunit Mic60 family. In terms of assembly, component of the mitochondrial contact site and cristae organizing system (MICOS) complex.

The protein resides in the mitochondrion inner membrane. Component of the MICOS complex, a large protein complex of the mitochondrial inner membrane that plays crucial roles in the maintenance of crista junctions, inner membrane architecture, and formation of contact sites to the outer membrane. Plays a role in keeping cristae membranes connected to the inner boundary membrane. Also promotes protein import via the mitochondrial intermembrane space assembly (MIA) pathway. The polypeptide is MICOS complex subunit mic60 (mic60) (Schizosaccharomyces pombe (strain 972 / ATCC 24843) (Fission yeast)).